Consider the following 283-residue polypeptide: MSRSPIVARTLPALRRALDTIRARKASVALVPTMGALHEGHLALVRLAKRRASKVVVSIFVNPAQFAPNEDFASYPRTWKADLAKLAAEKVDLVWNPDAKTMYPAGFASKIITEGPALVGLEDRFRPQFFGGVTTVVGKLFAQVRPDFALFGEKDFQQLRVVTRMARDLDLGAKVIGVPTMRERDGLAMSSRNVYLSPEHRSAAPTLYRSLKEAAKRLRAGDDIDVALGGGAEMITAAGFKLDYLEARHAETLEPIASLEDGPIRLLVAARIGSTRLIDNVAV.

ATP is bound at residue 34-41 (MGALHEGH). The active-site Proton donor is the His41. Gln65 lines the (R)-pantoate pocket. Gln65 contacts beta-alanine. 152–155 (GEKD) provides a ligand contact to ATP. (R)-pantoate is bound at residue Gln158. ATP is bound at residue 189–192 (MSSR).

The protein belongs to the pantothenate synthetase family. As to quaternary structure, homodimer.

The protein resides in the cytoplasm. The enzyme catalyses (R)-pantoate + beta-alanine + ATP = (R)-pantothenate + AMP + diphosphate + H(+). It functions in the pathway cofactor biosynthesis; (R)-pantothenate biosynthesis; (R)-pantothenate from (R)-pantoate and beta-alanine: step 1/1. Functionally, catalyzes the condensation of pantoate with beta-alanine in an ATP-dependent reaction via a pantoyl-adenylate intermediate. The polypeptide is Pantothenate synthetase (Rhodopseudomonas palustris (strain BisA53)).